A 543-amino-acid chain; its full sequence is Glutamyl-tRNA(Gln) amidotransferase subunit B-1, chloroplastic/mitochondrial (543 aa).

Residues 1–47 (MIRAGGPSPSPRGRRAGPIRLPRRAPSSTPTRAKTEEKASADASSRT) are disordered. Over residues 12–23 (RGRRAGPIRLPR) the composition is skewed to basic residues.

The protein belongs to the GatB/GatE family. GatB subfamily. In terms of assembly, subunit of the heterotrimeric GatCAB amidotransferase (AdT) complex, composed of A, B and C subunits.

It is found in the mitochondrion. The protein resides in the plastid. Its subcellular location is the chloroplast. It carries out the reaction L-glutamyl-tRNA(Gln) + L-glutamine + ATP + H2O = L-glutaminyl-tRNA(Gln) + L-glutamate + ADP + phosphate + H(+). Allows the formation of correctly charged Gln-tRNA(Gln) through the transamidation of misacylated Glu-tRNA(Gln) in chloroplasts and mitochondria. The reaction takes place in the presence of glutamine and ATP through an activated gamma-phospho-Glu-tRNA(Gln). The sequence is that of Glutamyl-tRNA(Gln) amidotransferase subunit B-1, chloroplastic/mitochondrial from Micromonas commoda (strain RCC299 / NOUM17 / CCMP2709) (Picoplanktonic green alga).